The chain runs to 84 residues: Small ribosomal subunit protein uS17 (84 aa).

It belongs to the universal ribosomal protein uS17 family. Part of the 30S ribosomal subunit.

Its function is as follows. One of the primary rRNA binding proteins, it binds specifically to the 5'-end of 16S ribosomal RNA. The chain is Small ribosomal subunit protein uS17 from Treponema pallidum (strain Nichols).